An 833-amino-acid polypeptide reads, in one-letter code: MAEQDQSRVKEINISQEMKTSFMDYAMSVIVSRALPDVRDGMKPVHRRILYAMNELGMTSDKAYKKSARIVGEVIGKYHPHGDSAVYETMVRMAQDFSYRYMLVDGHGNFGSIDGDAAAAMRYTEARMSKISMELVRDINKDTIDYQDNYDGSEKEPVVMPSRFPNLLVNGASGIAVGMATNIPPHQLGEVIDGVLALSKNPDISVPELMEHIPGPDFPTGAEILGRSGIRKAYQTGRGSITLRAKTEIEEHHGKQRIIVHEIPYQVNKAKLIEKIAELVRDKKIDGITDLRDESDRNGMRIVIEVRKDANANVLLNNLYKQTALQTSFGINLLALVEGQPKVLNLKECLEHYLAHQVIVIRRRTAFELRKAEARAHILEGLRIALDHLDEVISLIRSSQTTEIARNGLMERFELSYEQAQAILDMRLQRLTGLERDKIEAEYKELIERIAELKAILADHEKVLDIIREELLELKEKYNDERKTAISASEDMFEDEDLIPRQNVVITLTHHGYIKRLPISTYRSQKRGGRGIQGMGTNEDDFVQHLFTTNSHHTILFFTNKGKVYRLKGYEIPELGRTAKGIPIINLLQIEQDEYISTIIPIEEFTEDHYLFFMTKDGIAKRTQLSSFANIRRGGLFAINLREGDELHGVRLTNGDKEVIVGTRQGMAIRFHETDVRLMGRTATGVKGISLTGDDHVVGMDIVEDGQDVLIVTEKGFGKRTPIADYRIQTRGGKGIKTCNITEKNGPLVSLKVVSVDHDLMIITASGIIIRLHVKDISVTGRITQGVTLIRVAEGEEVATVARVDIEDDELDEDESIEEERDDRSEVEQGENE.

The Topo IIA-type catalytic domain occupies 35–498 (LPDVRDGMKP…SEDMFEDEDL (464 aa)). The active-site O-(5'-phospho-DNA)-tyrosine intermediate is the Tyr123. Residues 525-531 (QKRGGRG) carry the GyrA-box motif. Residues 803–833 (RVDIEDDELDEDESIEEERDDRSEVEQGENE) are disordered. The span at 806–821 (IEDDELDEDESIEEER) shows a compositional bias: acidic residues.

The protein belongs to the type II topoisomerase GyrA/ParC subunit family. Heterotetramer, composed of two GyrA and two GyrB chains. In the heterotetramer, GyrA contains the active site tyrosine that forms a transient covalent intermediate with DNA, while GyrB binds cofactors and catalyzes ATP hydrolysis.

The protein localises to the cytoplasm. It catalyses the reaction ATP-dependent breakage, passage and rejoining of double-stranded DNA.. A type II topoisomerase that negatively supercoils closed circular double-stranded (ds) DNA in an ATP-dependent manner to modulate DNA topology and maintain chromosomes in an underwound state. Negative supercoiling favors strand separation, and DNA replication, transcription, recombination and repair, all of which involve strand separation. Also able to catalyze the interconversion of other topological isomers of dsDNA rings, including catenanes and knotted rings. Type II topoisomerases break and join 2 DNA strands simultaneously in an ATP-dependent manner. The protein is DNA gyrase subunit A of Halalkalibacterium halodurans (strain ATCC BAA-125 / DSM 18197 / FERM 7344 / JCM 9153 / C-125) (Bacillus halodurans).